Consider the following 434-residue polypeptide: GTPase Obg (434 aa).

The Obg domain maps to 1–158 (MFLDTAKIKV…RELQLELKIL (158 aa)). The 178-residue stretch at 159–336 (ADVGLVGFPS…LLDATAELLD (178 aa)) folds into the OBG-type G domain. GTP is bound by residues 165-172 (GFPSVGKS), 190-194 (FTTIV), 212-215 (DLPG), 282-285 (NKMD), and 317-319 (SGL). Mg(2+)-binding residues include serine 172 and threonine 192. Residues 356-434 (GFDEEEKAFE…IGKFEFEFVD (79 aa)) enclose the OCT domain.

It belongs to the TRAFAC class OBG-HflX-like GTPase superfamily. OBG GTPase family. As to quaternary structure, monomer. It depends on Mg(2+) as a cofactor.

The protein resides in the cytoplasm. An essential GTPase which binds GTP, GDP and possibly (p)ppGpp with moderate affinity, with high nucleotide exchange rates and a fairly low GTP hydrolysis rate. Plays a role in control of the cell cycle, stress response, ribosome biogenesis and in those bacteria that undergo differentiation, in morphogenesis control. The polypeptide is GTPase Obg (Streptococcus pneumoniae (strain Hungary19A-6)).